We begin with the raw amino-acid sequence, 228 residues long: Protein LIAT1 (228 aa).

The disordered stretch occupies residues 1–108 (MAGRGGTGAA…RAEPRDKEEN (108 aa)). Over residues 12-24 (YGEEGEEEEEEEA) the composition is skewed to acidic residues. The tract at residues 49 to 71 (KRKVKKKKKKKKTKGSGKGDADK) is lysine-rich domain. Residues 50 to 63 (RKVKKKKKKKKTKG) show a composition bias toward basic residues. A compositionally biased stretch (basic and acidic residues) spans 90-108 (LNPHKDHGLRAEPRDKEEN). An interaction with ATE1 region spans residues 113–165 (PYSYSINHPCFAEIEDTLSSQINESLRWDGILTDPEAEKERIRIYKLNRRKRY). Copy 1 of the repeat occupies 169 to 178 (ALKCFHSDPC).

In terms of assembly, self-associates (via Lys-rich domain); targets LIAT1 to the nucleolus. Interacts with ATE1; it is not a substrate of ATE1, the interaction takes place in the cytoplasm and seems to increase ATE1 arginyltransferase activity. Interacts with JMJD6 and MRPS14. Post-translationally, post-translationally modified by JMJD6 lysyl-hydroxylase activity at its Lys-rich domain, which inhibits its self-association and nucleolar localization. As to expression, highly expressed in spleen, thymus, liver and brown adipose tissue. Moderately expressed in liver, testis and lung.

The protein resides in the nucleus. It localises to the nucleolus. It is found in the cytoplasm. In terms of biological role, participates in nucleolar liquid-liquid phase separation (LLPS) through its N-terminal intrinsically disordered region (IDR). May be involved in ATE1-mediated N-terminal arginylation. This Mus musculus (Mouse) protein is Protein LIAT1.